We begin with the raw amino-acid sequence, 318 residues long: Myoblast determination protein 1 (318 aa).

Met1 participates in a covalent cross-link: Peptide (Met-Gly) (interchain with G-Cter in ubiquitin). The residue at position 104 (Lys104) is an N6-methyllysine; by EHMT2. One can recognise a bHLH domain in the interval 109-160 (DRRKAATMRERRRLSKVNEAFETLKRCTSSNPNQRLPKVEILRNAIRYIEGL). 2 disordered regions span residues 175–225 (AAFY…QNGY) and 265–318 (APAL…YQVL). The segment covering 196 to 206 (SDASSPRSNCS) has biased composition (polar residues). The span at 265–274 (APALLLADAP) shows a compositional bias: low complexity. Composition is skewed to polar residues over residues 287 to 298 (LSDTEQGTQTPS) and 307 to 318 (AGSNPNAIYQVL).

As to quaternary structure, interacts with SUV39H1. Efficient DNA binding requires dimerization with another bHLH protein. Seems to form active heterodimers with ITF-2. Interacts with DDX5. Interacts with CHD2. Interacts with TSC22D3 isoform 1 and isoform 4. Interacts with SETD3. Interacts with P-TEFB complex; promotes the transcriptional activity of MYOD1 through its CDK9-mediated phosphorylation. Interacts with CSRP3. Interacts with NUPR1. Post-translationally, acetylated by a complex containing EP300 and PCAF. The acetylation is essential to activate target genes. Conversely, its deacetylation by SIRT1 inhibits its function. In terms of processing, ubiquitinated on the N-terminus; which is required for proteasomal degradation. Phosphorylated by CDK9. This phosphorylation promotes its function in muscle differentiation. Post-translationally, methylation at Lys-104 by EHMT2/G9a inhibits myogenic activity.

The protein localises to the nucleus. Its function is as follows. Acts as a transcriptional activator that promotes transcription of muscle-specific target genes and plays a role in muscle differentiation. Together with MYF5 and MYOG, co-occupies muscle-specific gene promoter core region during myogenesis. Induces fibroblasts to differentiate into myoblasts. Interacts with and is inhibited by the twist protein. This interaction probably involves the basic domains of both proteins. In Mus musculus (Mouse), this protein is Myoblast determination protein 1 (Myod1).